We begin with the raw amino-acid sequence, 974 residues long: Receptor-like protein 7 (974 aa).

The N-terminal stretch at 1–24 (MSFLIRSICFLILIPSFLITFVSA) is a signal peptide. Residues 25–930 (TQHLCHSDQK…EEEEEESFSW (906 aa)) lie on the Extracellular side of the membrane. 2 N-linked (GlcNAc...) asparagine glycosylation sites follow: Asn54 and Asn90. LRR repeat units follow at residues 96-120 (LRHL…EFDK), 122-145 (TGLE…LLQL), 147-166 (KLVS…SFHY), 181-204 (LRNL…EFSN), 206-229 (RSLR…ILLI), and 230-252 (PNLQ…VFHE). The N-linked (GlcNAc...) asparagine glycan is linked to Asn253. LRR repeat units lie at residues 254–277 (NSLL…ISSL), 278–301 (KNLT…LGNL), 302–325 (SHLS…IGNL), 327–349 (QLTN…LSNL), and 350–373 (TKLN…ISQL). Asn279 and Asn300 each carry an N-linked (GlcNAc...) asparagine glycan. Asn348 carries an N-linked (GlcNAc...) asparagine glycan. An LRR 12; degenerate repeat occupies 374–396 (SKLKFFFADDNPFIGAILSPLLK). 18 LRR repeats span residues 397-422 (IPSL…IFML), 425-448 (LETF…VFSS), 454-472 (TLYI…SDFP), 473-495 (SNLE…IRKG), 496-519 (RNLQ…LWRM), 521-542 (TLNS…VKAS), 544-570 (ESQL…SLRY), 572-589 (SGSN…ICGL), 590-616 (SSLE…LMSS), 618-638 (SDLD…FMNA), 639-662 (TKLR…LTGC), 664-685 (SLEV…ELNS), 687-712 (QKLQ…VWFG), 713-737 (FPQL…YFMN), 785-809 (LTIY…IGLL), 810-833 (KELR…LANL), 834-857 (KNLE…LGTL), and 859-882 (SLAW…QFQR). Asn434, Asn466, and Asn484 each carry an N-linked (GlcNAc...) asparagine glycan. Residue Asn529 is glycosylated (N-linked (GlcNAc...) asparagine). Residues Asn577, Asn603, Asn624, and Asn637 are each glycosylated (N-linked (GlcNAc...) asparagine). Asn737 carries an N-linked (GlcNAc...) asparagine glycan. Residues Asn816, Asn845, and Asn864 are each glycosylated (N-linked (GlcNAc...) asparagine). The disordered stretch occupies residues 899-923 (LENVCGHIKESTPTQTEPLETKEEE). The helical transmembrane segment at 931-951 (IAAGLGFAPGVVFGLAMGYIV) threads the bilayer. The Cytoplasmic portion of the chain corresponds to 952-974 (VSYKHQWFMKTFGRSKQQNTRTR).

This sequence belongs to the RLP family.

The protein localises to the cell membrane. The protein is Receptor-like protein 7 of Arabidopsis thaliana (Mouse-ear cress).